A 570-amino-acid polypeptide reads, in one-letter code: Peptidyl-prolyl cis-trans isomerase-like 2 (570 aa).

Residues 37-110 (KRLPFNFCSL…GDYVDPVTYK (74 aa)) form the U-box domain. Disordered regions lie at residues 215–253 (RSER…KPTP), 428–449 (STTL…PTPD), and 469–570 (KKAE…SSWD). Residues 234–248 (STTTSTQSKTASFQS) show a composition bias toward low complexity. In terms of domain architecture, PPIase cyclophilin-type spans 298-457 (QKGYARISTT…PDIRITDVTI (160 aa)). Over residues 428–446 (STTLNNLETHPVNSSTNRP) the composition is skewed to polar residues. The span at 469-483 (KKAEEASGKNKKVDP) shows a compositional bias: basic and acidic residues. Acidic residues-rich tracts occupy residues 484 to 497 (TEED…DDDQ) and 535 to 550 (QEED…EPEP).

This sequence belongs to the cyclophilin-type PPIase family. PPIL2 subfamily.

It localises to the nucleus. The enzyme catalyses [protein]-peptidylproline (omega=180) = [protein]-peptidylproline (omega=0). It carries out the reaction S-ubiquitinyl-[E2 ubiquitin-conjugating enzyme]-L-cysteine + [acceptor protein]-L-lysine = [E2 ubiquitin-conjugating enzyme]-L-cysteine + N(6)-ubiquitinyl-[acceptor protein]-L-lysine.. Its function is as follows. May catalyze the cis-trans isomerization of proline imidic peptide bonds in oligopeptides thereby assisting the folding of proteins. May also function as a chaperone, playing a role in intracellular transport of proteins. May also have a protein ubiquitin ligase activity acting as an E3 ubiquitin protein ligase or as a ubiquitin-ubiquitin ligase promoting elongation of ubiquitin chains on proteins. In Aspergillus oryzae (strain ATCC 42149 / RIB 40) (Yellow koji mold), this protein is Peptidyl-prolyl cis-trans isomerase-like 2 (cyp8).